The following is a 235-amino-acid chain: Phosphoribosylaminoimidazole-succinocarboxamide synthase (235 aa).

It belongs to the SAICAR synthetase family.

The enzyme catalyses 5-amino-1-(5-phospho-D-ribosyl)imidazole-4-carboxylate + L-aspartate + ATP = (2S)-2-[5-amino-1-(5-phospho-beta-D-ribosyl)imidazole-4-carboxamido]succinate + ADP + phosphate + 2 H(+). Its pathway is purine metabolism; IMP biosynthesis via de novo pathway; 5-amino-1-(5-phospho-D-ribosyl)imidazole-4-carboxamide from 5-amino-1-(5-phospho-D-ribosyl)imidazole-4-carboxylate: step 1/2. This chain is Phosphoribosylaminoimidazole-succinocarboxamide synthase, found in Streptococcus pneumoniae serotype 19F (strain G54).